A 614-amino-acid chain; its full sequence is Phosphomethylpyrimidine synthase (614 aa).

The segment covering Met-1 to Ser-16 has biased composition (low complexity). The tract at residues Met-1 to Pro-36 is disordered. Residues Asn-230, Met-259, Tyr-288, His-324, Ser-344 to Gly-346, Asp-385 to Arg-388, and Glu-424 contribute to the substrate site. His-428 provides a ligand contact to Zn(2+). Position 451 (Tyr-451) interacts with substrate. His-492 is a binding site for Zn(2+). Residues Cys-572, Cys-575, and Cys-580 each coordinate [4Fe-4S] cluster.

It belongs to the ThiC family. In terms of assembly, homodimer. It depends on [4Fe-4S] cluster as a cofactor.

The catalysed reaction is 5-amino-1-(5-phospho-beta-D-ribosyl)imidazole + S-adenosyl-L-methionine = 4-amino-2-methyl-5-(phosphooxymethyl)pyrimidine + CO + 5'-deoxyadenosine + formate + L-methionine + 3 H(+). Its pathway is cofactor biosynthesis; thiamine diphosphate biosynthesis. Its function is as follows. Catalyzes the synthesis of the hydroxymethylpyrimidine phosphate (HMP-P) moiety of thiamine from aminoimidazole ribotide (AIR) in a radical S-adenosyl-L-methionine (SAM)-dependent reaction. The chain is Phosphomethylpyrimidine synthase from Stenotrophomonas maltophilia (strain R551-3).